A 577-amino-acid polypeptide reads, in one-letter code: Solute carrier family 22 member 16 (577 aa).

A helical transmembrane segment spans residues 23–43 (LYFICAFQNISCGIHYLASVF). N-linked (GlcNAc...) asparagine glycans are attached at residues N57, N65, N68, and N108. Helical transmembrane passes span 152 to 172 (WLAMLIQPLFMFGVLLGSVTF), 183 to 203 (VVLWATSSSMFLFGIAAAFAV), 214 to 234 (FLAMVASGYLVVGFVYVMEFI), 244 to 264 (VHLHSFFAVGTLLVALTGYLV), and 268 to 288 (WLYQMILSTVTVPFILCCWVL). N-linked (GlcNAc...) asparagine glycans are attached at residues N345 and N352. 6 helical membrane passes run 359 to 379 (TLTVWLIWFTGSLGFYSFSLN), 389 to 409 (LNLFLLGVVEIPAYTFVCIAM), 416 to 436 (TVLAYSLFCSALACGVVMVIP), 441 to 461 (ILGVVTAMVGKFAIGAAFGLI), 476 to 496 (LAVGSGSMVCRLASILAPFSV), and 501 to 521 (IWIFIPQLFVGTMALLSGVLT). Positions 543–577 (ESENESKSSKLLLTTNNSGLEKTEAITPRDSGLGE) are disordered. Residues N546 and N558 are each glycosylated (N-linked (GlcNAc...) asparagine). The span at 551 to 560 (SKLLLTTNNS) shows a compositional bias: low complexity.

This sequence belongs to the major facilitator (TC 2.A.1) superfamily. Organic cation transporter (TC 2.A.1.19) family. In terms of tissue distribution, expressed in testis and epididymis (at protein level). Expressed in endometrium (at protein level); highly expressed during the normal secretory phase, but expression is significantly reduced in the proliferative phase. Expressed at lower levels in adult tissues including bone marrow (at protein level). Expressed in hematopoietic cells, including CD34(+) leukocytes. Expressed in fetal liver (at protein level), brain, lung, kidney, heart, skeletal muscle, spleen and thymus. Expressed in leukemia cells. Abundantly expressed in ovarian cancer clear-cell adenocarcinoma.

It localises to the cell membrane. It catalyses the reaction (R)-carnitine(in) = (R)-carnitine(out). The enzyme catalyses spermidine(in) = spermidine(out). Facilitative organic cation transporter that mediates the transport of carnitine as well as the polyamine spermidine. Mediates the partially Na(+)-dependent bidirectional transport of carnitine. May mediate L-carnitine secretion from testis epididymal epithelium into the lumen which is involved in the maturation of spermatozoa. In Homo sapiens (Human), this protein is Solute carrier family 22 member 16.